The sequence spans 79 residues: MAQQRRGGFKRRKKVDYIAANKIEYVDYKDTELLSRFVSERGKILPRRVTGTSAKNQRKVTTAIKRARVMALMPYVNED.

The protein belongs to the bacterial ribosomal protein bS18 family. Part of the 30S ribosomal subunit. Forms a tight heterodimer with protein bS6.

Its function is as follows. Binds as a heterodimer with protein bS6 to the central domain of the 16S rRNA, where it helps stabilize the platform of the 30S subunit. The chain is Small ribosomal subunit protein bS18 from Streptococcus agalactiae serotype Ia (strain ATCC 27591 / A909 / CDC SS700).